Reading from the N-terminus, the 304-residue chain is KIN17-like protein (304 aa).

The C2H2-type zinc-finger motif lies at 26-50 (WYCSACQKQMRDENGFKCHTQSEGH). Disordered stretches follow at residues 204–228 (IDLS…SAQN) and 261–291 (LNKS…DIIA).

The protein belongs to the KIN17 family.

The protein localises to the nucleus. It is found in the nucleolus. This is KIN17-like protein from Schizosaccharomyces pombe (strain 972 / ATCC 24843) (Fission yeast).